We begin with the raw amino-acid sequence, 79 residues long: MTQKSIHPKWFNDTKVYCDGKHVMTVGSTQAELHVDIWSGNHPFFTGSQRIIDTEGRVEKFMRKYNLQSNNDKQSKLEV.

It belongs to the bacterial ribosomal protein bL31 family. Type A subfamily. In terms of assembly, part of the 50S ribosomal subunit.

It is found in the plastid. It localises to the chloroplast. Functionally, binds the 23S rRNA. The protein is Large ribosomal subunit protein bL31c of Gracilaria tenuistipitata var. liui (Red alga).